A 497-amino-acid polypeptide reads, in one-letter code: Glycerol kinase (497 aa).

T11 is a binding site for ADP. Positions 11, 12, and 13 each coordinate ATP. T11 is a binding site for sn-glycerol 3-phosphate. Residue R15 coordinates ADP. Positions 81, 82, 133, and 242 each coordinate sn-glycerol 3-phosphate. R81, E82, Y133, D242, and Q243 together coordinate glycerol. T264 and G307 together coordinate ADP. ATP contacts are provided by T264, G307, Q311, and G412. Residues G412 and N416 each coordinate ADP.

This sequence belongs to the FGGY kinase family.

It catalyses the reaction glycerol + ATP = sn-glycerol 3-phosphate + ADP + H(+). It functions in the pathway polyol metabolism; glycerol degradation via glycerol kinase pathway; sn-glycerol 3-phosphate from glycerol: step 1/1. Its activity is regulated as follows. Inhibited by fructose 1,6-bisphosphate (FBP). Functionally, key enzyme in the regulation of glycerol uptake and metabolism. Catalyzes the phosphorylation of glycerol to yield sn-glycerol 3-phosphate. In Leptothrix cholodnii (strain ATCC 51168 / LMG 8142 / SP-6) (Leptothrix discophora (strain SP-6)), this protein is Glycerol kinase.